A 195-amino-acid polypeptide reads, in one-letter code: Thioredoxin reductase-like selenoprotein T (195 aa).

Positions 1 to 19 are cleaved as a signal peptide; the sequence is MRLLLLLLVAASAVVRSDA. A cross-link (cysteinyl-selenocysteine (Cys-Sec)) is located at residues 46-49; it reads CVSU. Residue Sec49 is a non-standard amino acid, selenocysteine. A helical transmembrane segment spans residues 85–103; that stretch reads IASFLSVFKLVLIGLIIVG.

Belongs to the SelWTH family. Selenoprotein T subfamily. Post-translationally, may contain a selenide-sulfide bond between Cys-46 and Sec-49. This bond is speculated to serve as redox-active pair.

The protein resides in the endoplasmic reticulum membrane. It catalyses the reaction [thioredoxin]-dithiol + NADP(+) = [thioredoxin]-disulfide + NADPH + H(+). In terms of biological role, selenoprotein with thioredoxin reductase-like oxidoreductase activity. Protects dopaminergic neurons against oxidative stress and cell death. Involved in ADCYAP1/PACAP-induced calcium mobilization and neuroendocrine secretion. Plays a role in fibroblast anchorage and redox regulation. In gastric smooth muscle, modulates the contraction processes through the regulation of calcium release and MYLK activation. In pancreatic islets, involved in the control of glucose homeostasis, contributes to prolonged ADCYAP1/PACAP-induced insulin secretion. The polypeptide is Thioredoxin reductase-like selenoprotein T (Bos taurus (Bovine)).